The following is a 395-amino-acid chain: Ketol-acid reductoisomerase, mitochondrial (395 aa).

The transit peptide at 1 to 47 (MLRTQAARLICNSRVITAKRTFALATRAAAYSRPAARFVKPMITTRG) directs the protein to the mitochondrion. One can recognise a KARI N-terminal Rossmann domain in the interval 57–246 (VETVYERADW…AIGSGYVYQT (190 aa)). NADP(+)-binding positions include 84–93 (GYGSQGYGQG), 108–113 (RKDGAS), and 146–150 (SDAAQ). Residue H171 is part of the active site. The 148-residue stretch at 247-394 (TFEREVNSDL…KEVRKLRPEN (148 aa)) folds into the KARI C-terminal knotted domain. Mg(2+) contacts are provided by D255, E259, E291, and E295. S317 serves as a coordination point for substrate. A Phosphoserine modification is found at S355. The segment at 363–395 (DYREKLEKELDTIRNMEIWKVGKEVRKLRPENQ) is hydrophilic.

This sequence belongs to the ketol-acid reductoisomerase family. Requires Mg(2+) as cofactor.

The protein resides in the mitochondrion. It catalyses the reaction (2R)-2,3-dihydroxy-3-methylbutanoate + NADP(+) = (2S)-2-acetolactate + NADPH + H(+). It carries out the reaction (2R,3R)-2,3-dihydroxy-3-methylpentanoate + NADP(+) = (S)-2-ethyl-2-hydroxy-3-oxobutanoate + NADPH + H(+). It functions in the pathway amino-acid biosynthesis; L-isoleucine biosynthesis; L-isoleucine from 2-oxobutanoate: step 2/4. It participates in amino-acid biosynthesis; L-valine biosynthesis; L-valine from pyruvate: step 2/4. In terms of biological role, involved in the biosynthesis of branched-chain amino acids (BCAA). Catalyzes the second common step in the parallel biosynthesis of isoleucine and valine. Converts alpha-aceto-alpha-hydroxybutyrate (AHB) to alpha,beta-dihydroxy-beta-methylvalerate (DHMV) and alpha-acetolactate (AL) to alpha,beta-dihydroxy-isovalerate (DHV) in isoleucine and valine biosynthesis, respectively. The sequence is that of Ketol-acid reductoisomerase, mitochondrial from Saccharomyces cerevisiae (strain ATCC 204508 / S288c) (Baker's yeast).